A 443-amino-acid chain; its full sequence is MDENTVAVKVEEISPVKKKLLFDVPWEDVKRERDTIYRNFSRTAKIKGFRKGKIPRKILELHYKKHAEEETVSSLVSRLYWDALKEHDIRAISQPEIEQQGIEEEKDFSFSATVEVEPQIDPQGYLDMTLSKEEQTVTEDEVDGRLEDIRKMFGTLEEVTEDREIRKGDFVTIDFEGFIDGQNPEEMKRNDYFLEIGSNTMVPGFEDQLLGEKVGTIKEIKIIFPENYQINSNVAGKDATFKVTIKNLKEKKLPELDENFVKNFDKYESLDDLKEDVRKSLFEDHKRKTEADMSKKIMDKLLEMNDFDAPSSYVERQIFFMMMEARKRLITTGMDPAMIDQVSASWHDKYKDEATRIVKSSLLLKSIAQKESIDVTDEEFEERLREIARQYSQDYEKIKDSFNEDMKENVRNDILNKKVFDFIESKASVSMIEKEKTSPEEAN.

In terms of domain architecture, PPIase FKBP-type spans 168-254 (GDFVTIDFEG…IKNLKEKKLP (87 aa)).

The protein belongs to the FKBP-type PPIase family. Tig subfamily.

Its subcellular location is the cytoplasm. It carries out the reaction [protein]-peptidylproline (omega=180) = [protein]-peptidylproline (omega=0). Involved in protein export. Acts as a chaperone by maintaining the newly synthesized protein in an open conformation. Functions as a peptidyl-prolyl cis-trans isomerase. The protein is Trigger factor of Syntrophus aciditrophicus (strain SB).